The chain runs to 101 residues: MIGGICPTCGLPKELCICEEVAKEQQRINVKVNKRRYGKEVTVIEGLDPTDIDLEDLSKFMKGKLACGGTVKGNSIELQGNHRDRVKELLSLKGYSTENIS.

It belongs to the SUI1 family.

This is Protein translation factor SUI1 homolog from Methanoregula boonei (strain DSM 21154 / JCM 14090 / 6A8).